Reading from the N-terminus, the 98-residue chain is MPIIYTNIVLAFMISLLGMLIYRSHLMSSLLCLEGMMLSLFMMSTLMALNMHFPLANIVPIALLVFAACEAAVGLALLISISNTYGLDHIHNLNLLQC.

3 helical membrane-spanning segments follow: residues 1 to 21 (MPII…GMLI), 29 to 49 (SLLC…LMAL), and 58 to 78 (IVPI…LALL).

The protein belongs to the complex I subunit 4L family. Core subunit of respiratory chain NADH dehydrogenase (Complex I) which is composed of 45 different subunits.

The protein resides in the mitochondrion inner membrane. It carries out the reaction a ubiquinone + NADH + 5 H(+)(in) = a ubiquinol + NAD(+) + 4 H(+)(out). In terms of biological role, core subunit of the mitochondrial membrane respiratory chain NADH dehydrogenase (Complex I) which catalyzes electron transfer from NADH through the respiratory chain, using ubiquinone as an electron acceptor. Part of the enzyme membrane arm which is embedded in the lipid bilayer and involved in proton translocation. This Nasalis larvatus (Proboscis monkey) protein is NADH-ubiquinone oxidoreductase chain 4L (MT-ND4L).